A 431-amino-acid polypeptide reads, in one-letter code: Serine--tRNA ligase (431 aa).

An L-serine-binding site is contributed by 235–237 (TAE). Residues 266 to 268 (RRE) and Val-282 contribute to the ATP site. Glu-289 serves as a coordination point for L-serine. Position 353–356 (353–356 (EASS)) interacts with ATP. Ser-389 contacts L-serine.

The protein belongs to the class-II aminoacyl-tRNA synthetase family. Type-1 seryl-tRNA synthetase subfamily. As to quaternary structure, homodimer. The tRNA molecule binds across the dimer.

It is found in the cytoplasm. It catalyses the reaction tRNA(Ser) + L-serine + ATP = L-seryl-tRNA(Ser) + AMP + diphosphate + H(+). The enzyme catalyses tRNA(Sec) + L-serine + ATP = L-seryl-tRNA(Sec) + AMP + diphosphate + H(+). It functions in the pathway aminoacyl-tRNA biosynthesis; selenocysteinyl-tRNA(Sec) biosynthesis; L-seryl-tRNA(Sec) from L-serine and tRNA(Sec): step 1/1. In terms of biological role, catalyzes the attachment of serine to tRNA(Ser). Is also able to aminoacylate tRNA(Sec) with serine, to form the misacylated tRNA L-seryl-tRNA(Sec), which will be further converted into selenocysteinyl-tRNA(Sec). The chain is Serine--tRNA ligase from Prosthecochloris aestuarii (strain DSM 271 / SK 413).